A 411-amino-acid chain; its full sequence is LL-diaminopimelate aminotransferase (411 aa).

The substrate site is built by Tyr15 and Gly42. Residues Tyr72, 108–109 (SK), Tyr132, Asn187, Tyr218, and 246–248 (SFS) each bind pyridoxal 5'-phosphate. Residues Lys109, Tyr132, and Asn187 each coordinate substrate. An N6-(pyridoxal phosphate)lysine modification is found at Lys249. 2 residues coordinate pyridoxal 5'-phosphate: Arg257 and Asn292. Positions 292 and 388 each coordinate substrate.

This sequence belongs to the class-I pyridoxal-phosphate-dependent aminotransferase family. LL-diaminopimelate aminotransferase subfamily. As to quaternary structure, homodimer. Pyridoxal 5'-phosphate serves as cofactor.

It carries out the reaction (2S,6S)-2,6-diaminopimelate + 2-oxoglutarate = (S)-2,3,4,5-tetrahydrodipicolinate + L-glutamate + H2O + H(+). Its pathway is amino-acid biosynthesis; L-lysine biosynthesis via DAP pathway; LL-2,6-diaminopimelate from (S)-tetrahydrodipicolinate (aminotransferase route): step 1/1. Functionally, involved in the synthesis of meso-diaminopimelate (m-DAP or DL-DAP), required for both lysine and peptidoglycan biosynthesis. Catalyzes the direct conversion of tetrahydrodipicolinate to LL-diaminopimelate. In Synechococcus sp. (strain JA-3-3Ab) (Cyanobacteria bacterium Yellowstone A-Prime), this protein is LL-diaminopimelate aminotransferase.